The primary structure comprises 735 residues: DNA ligase 1 (735 aa).

The span at 1–11 (MAGDKQGDKQA) shows a compositional bias: basic and acidic residues. The segment at 1–23 (MAGDKQGDKQAETTSVPAEARER) is disordered. NAD(+) contacts are provided by residues 48 to 52 (DAEFD), 97 to 98 (SL), and Glu-128. The N6-AMP-lysine intermediate role is filled by Lys-130. NAD(+) contacts are provided by Arg-151, Glu-188, Lys-305, and Lys-329. Residues Cys-423, Cys-426, Cys-442, and Cys-448 each coordinate Zn(2+). A BRCT domain is found at 643–732 (EGPRPLEGLT…PEAAADVALS (90 aa)).

This sequence belongs to the NAD-dependent DNA ligase family. LigA subfamily. It depends on Mg(2+) as a cofactor. The cofactor is Mn(2+).

The enzyme catalyses NAD(+) + (deoxyribonucleotide)n-3'-hydroxyl + 5'-phospho-(deoxyribonucleotide)m = (deoxyribonucleotide)n+m + AMP + beta-nicotinamide D-nucleotide.. Functionally, DNA ligase that catalyzes the formation of phosphodiester linkages between 5'-phosphoryl and 3'-hydroxyl groups in double-stranded DNA using NAD as a coenzyme and as the energy source for the reaction. It is essential for DNA replication and repair of damaged DNA. The sequence is that of DNA ligase 1 from Streptomyces coelicolor (strain ATCC BAA-471 / A3(2) / M145).